Here is a 295-residue protein sequence, read N- to C-terminus: Ethanolamine ammonia-lyase small subunit (295 aa).

Adenosylcob(III)alamin is bound by residues valine 207, glutamate 228, and cysteine 258.

The protein belongs to the EutC family. The basic unit is a heterodimer which dimerizes to form tetramers. The heterotetramers trimerize; 6 large subunits form a core ring with 6 small subunits projecting outwards. The cofactor is adenosylcob(III)alamin.

It localises to the bacterial microcompartment. It carries out the reaction ethanolamine = acetaldehyde + NH4(+). It participates in amine and polyamine degradation; ethanolamine degradation. In terms of biological role, catalyzes the deamination of various vicinal amino-alcohols to oxo compounds. Allows this organism to utilize ethanolamine as the sole source of nitrogen and carbon in the presence of external vitamin B12. In Escherichia coli (strain UTI89 / UPEC), this protein is Ethanolamine ammonia-lyase small subunit.